The sequence spans 41 residues: Large ribosomal subunit protein bL36 (41 aa).

Belongs to the bacterial ribosomal protein bL36 family.

In Beijerinckia indica subsp. indica (strain ATCC 9039 / DSM 1715 / NCIMB 8712), this protein is Large ribosomal subunit protein bL36.